The primary structure comprises 150 residues: Deoxyuridine 5'-triphosphate nucleotidohydrolase (150 aa).

Substrate is bound by residues 69–71 (RSG), asparagine 82, 86–88 (LID), and methionine 96.

This sequence belongs to the dUTPase family. It depends on Mg(2+) as a cofactor.

It carries out the reaction dUTP + H2O = dUMP + diphosphate + H(+). The protein operates within pyrimidine metabolism; dUMP biosynthesis; dUMP from dCTP (dUTP route): step 2/2. Its function is as follows. This enzyme is involved in nucleotide metabolism: it produces dUMP, the immediate precursor of thymidine nucleotides and it decreases the intracellular concentration of dUTP so that uracil cannot be incorporated into DNA. The polypeptide is Deoxyuridine 5'-triphosphate nucleotidohydrolase (Acinetobacter baumannii (strain AB307-0294)).